The chain runs to 638 residues: Stress-activated protein kinase alpha (638 aa).

6 ANK repeats span residues 43–72 (YGQS…TLKA), 80–109 (NGFS…NVDV), 113–146 (DLNT…NVNA), 150–181 (NGET…NVNL), 185–214 (FQES…DVDC), and 219–248 (ERKT…LFDW). In terms of domain architecture, SAM spans 240–303 (KKYKDLFDWL…LKETSNLANE (64 aa)). In terms of domain architecture, Protein kinase spans 351–620 (LEYTEKLGAG…RLVTIENEYR (270 aa)). Residues 357–365 (LGAGSSGKV) and Lys-378 contribute to the ATP site. Residue Asp-472 is the Proton acceptor of the active site.

It belongs to the protein kinase superfamily. TKL Ser/Thr protein kinase family. As to quaternary structure, interacts with F-actin. Post-translationally, autophosphorylated.

Its subcellular location is the cytoplasm. The protein localises to the cytoskeleton. The catalysed reaction is L-seryl-[protein] + ATP = O-phospho-L-seryl-[protein] + ADP + H(+). It catalyses the reaction L-threonyl-[protein] + ATP = O-phospho-L-threonyl-[protein] + ADP + H(+). Its function is as follows. May be involved in cortical F-actin organization and resistance to osmotic stress. Activated upon cell detachment, in vitro. This chain is Stress-activated protein kinase alpha (spkA-1), found in Dictyostelium discoideum (Social amoeba).